The following is a 154-amino-acid chain: Protein-export protein SecB (154 aa).

The protein belongs to the SecB family. Homotetramer, a dimer of dimers. One homotetramer interacts with 1 SecA dimer.

It localises to the cytoplasm. One of the proteins required for the normal export of preproteins out of the cell cytoplasm. It is a molecular chaperone that binds to a subset of precursor proteins, maintaining them in a translocation-competent state. It also specifically binds to its receptor SecA. This chain is Protein-export protein SecB, found in Buchnera aphidicola subsp. Schizaphis graminum (strain Sg).